Reading from the N-terminus, the 589-residue chain is Aspartate--tRNA ligase (589 aa).

Glu176 contacts L-aspartate. The aspartate stretch occupies residues 200-203; it reads QLFK. Arg222 lines the L-aspartate pocket. Residues 222-224 and Gln231 contribute to the ATP site; that span reads RDE. His449 contacts L-aspartate. Glu483 serves as a coordination point for ATP. Arg490 is a binding site for L-aspartate. An ATP-binding site is contributed by 535-538; that stretch reads GLDR.

Belongs to the class-II aminoacyl-tRNA synthetase family. Type 1 subfamily. As to quaternary structure, homodimer.

The protein resides in the cytoplasm. The enzyme catalyses tRNA(Asp) + L-aspartate + ATP = L-aspartyl-tRNA(Asp) + AMP + diphosphate. Catalyzes the attachment of L-aspartate to tRNA(Asp) in a two-step reaction: L-aspartate is first activated by ATP to form Asp-AMP and then transferred to the acceptor end of tRNA(Asp). This is Aspartate--tRNA ligase from Enterococcus faecalis (strain ATCC 700802 / V583).